Consider the following 494-residue polypeptide: Glycerol kinase (494 aa).

T12 contacts ADP. The ATP site is built by T12, T13, and S14. T12 is a sn-glycerol 3-phosphate binding site. Residue R16 participates in ADP binding. Sn-glycerol 3-phosphate-binding residues include R82, E83, Y134, and D244. Glycerol-binding residues include R82, E83, Y134, D244, and Q245. Positions 266 and 309 each coordinate ADP. ATP-binding residues include T266, G309, Q313, and G410. Positions 410 and 414 each coordinate ADP.

This sequence belongs to the FGGY kinase family. Homotetramer and homodimer (in equilibrium).

The enzyme catalyses glycerol + ATP = sn-glycerol 3-phosphate + ADP + H(+). It participates in polyol metabolism; glycerol degradation via glycerol kinase pathway; sn-glycerol 3-phosphate from glycerol: step 1/1. Its activity is regulated as follows. Activated by phosphorylation and inhibited by fructose 1,6-bisphosphate (FBP). Key enzyme in the regulation of glycerol uptake and metabolism. Catalyzes the phosphorylation of glycerol to yield sn-glycerol 3-phosphate. This chain is Glycerol kinase, found in Desulfitobacterium hafniense (strain DSM 10664 / DCB-2).